A 157-amino-acid chain; its full sequence is 2-C-methyl-D-erythritol 2,4-cyclodiphosphate synthase (157 aa).

Residues Asp8 and His10 each contribute to the a divalent metal cation site. 4-CDP-2-C-methyl-D-erythritol 2-phosphate-binding positions include 8–10 (DVH) and 34–35 (HS). An a divalent metal cation-binding site is contributed by His42. 4-CDP-2-C-methyl-D-erythritol 2-phosphate is bound by residues 56 to 58 (DIG), 61 to 65 (FPDTD), 100 to 106 (AQAPKML), 132 to 135 (TTTE), Phe139, and Arg142.

This sequence belongs to the IspF family. As to quaternary structure, homotrimer. The cofactor is a divalent metal cation.

The catalysed reaction is 4-CDP-2-C-methyl-D-erythritol 2-phosphate = 2-C-methyl-D-erythritol 2,4-cyclic diphosphate + CMP. It functions in the pathway isoprenoid biosynthesis; isopentenyl diphosphate biosynthesis via DXP pathway; isopentenyl diphosphate from 1-deoxy-D-xylulose 5-phosphate: step 4/6. Involved in the biosynthesis of isopentenyl diphosphate (IPP) and dimethylallyl diphosphate (DMAPP), two major building blocks of isoprenoid compounds. Catalyzes the conversion of 4-diphosphocytidyl-2-C-methyl-D-erythritol 2-phosphate (CDP-ME2P) to 2-C-methyl-D-erythritol 2,4-cyclodiphosphate (ME-CPP) with a corresponding release of cytidine 5-monophosphate (CMP). This chain is 2-C-methyl-D-erythritol 2,4-cyclodiphosphate synthase, found in Erwinia tasmaniensis (strain DSM 17950 / CFBP 7177 / CIP 109463 / NCPPB 4357 / Et1/99).